Reading from the N-terminus, the 906-residue chain is Probable disease resistance RPP8-like protein 2 (906 aa).

Residues 15–68 (ELLSRESARLNGIDEQVDGLKRQLGRLQSLLKDADAKKNETERVRNFLEDVKDI) adopt a coiled-coil conformation. One can recognise an NB-ARC domain in the interval 144–454 (LQERQREIRQ…AEGIITPFHD (311 aa)). ATP is bound at residue 190–197 (GMGGIGKT). LRR repeat units lie at residues 573–597 (LPLL…SIGD), 598–621 (LIHL…LGNL), 623–644 (LLLC…NVLK), 646–671 (MQEL…DLVN), 672–696 (LESL…KLSV), 704–727 (ECTF…SFHD), 740–766 (LLVL…QYRF), 767–790 (PPHL…ILEK), 791–818 (LLHL…GFPQ), and 840–865 (MPCL…KYVT).

The protein belongs to the disease resistance NB-LRR family. RPP8/HRT subfamily.

In terms of biological role, potential disease resistance protein. The polypeptide is Probable disease resistance RPP8-like protein 2 (RPP8L2) (Arabidopsis thaliana (Mouse-ear cress)).